The chain runs to 92 residues: Cell division topological specificity factor (92 aa).

Belongs to the MinE family.

Functionally, prevents the cell division inhibition by proteins MinC and MinD at internal division sites while permitting inhibition at polar sites. This ensures cell division at the proper site by restricting the formation of a division septum at the midpoint of the long axis of the cell. The protein is Cell division topological specificity factor of Syntrophobacter fumaroxidans (strain DSM 10017 / MPOB).